Consider the following 184-residue polypeptide: ATP synthase subunit b, chloroplastic (184 aa).

A helical transmembrane segment spans residues 27–49 (LATNLINLSVVLGVLVFFGKGVL).

It belongs to the ATPase B chain family. In terms of assembly, F-type ATPases have 2 components, F(1) - the catalytic core - and F(0) - the membrane proton channel. F(1) has five subunits: alpha(3), beta(3), gamma(1), delta(1), epsilon(1). F(0) has four main subunits: a(1), b(1), b'(1) and c(10-14). The alpha and beta chains form an alternating ring which encloses part of the gamma chain. F(1) is attached to F(0) by a central stalk formed by the gamma and epsilon chains, while a peripheral stalk is formed by the delta, b and b' chains.

It localises to the plastid. Its subcellular location is the chloroplast thylakoid membrane. In terms of biological role, f(1)F(0) ATP synthase produces ATP from ADP in the presence of a proton or sodium gradient. F-type ATPases consist of two structural domains, F(1) containing the extramembraneous catalytic core and F(0) containing the membrane proton channel, linked together by a central stalk and a peripheral stalk. During catalysis, ATP synthesis in the catalytic domain of F(1) is coupled via a rotary mechanism of the central stalk subunits to proton translocation. Functionally, component of the F(0) channel, it forms part of the peripheral stalk, linking F(1) to F(0). This is ATP synthase subunit b, chloroplastic from Cicer arietinum (Chickpea).